The chain runs to 626 residues: Alpha terpineol synthase, chloroplastic (626 aa).

The N-terminal 38 residues, 1–38, are a transit peptide targeting the chloroplast; that stretch reads MALLSVAPLASKSRLHKTLITSAHHLKPSPTTIPTLPV. Mg(2+)-binding residues include D377, D381, and D529. The DDXXD motif signature appears at 377-381; that stretch reads DDIYD.

It belongs to the terpene synthase family. Tpsd subfamily. Mg(2+) serves as cofactor. Requires Mn(2+) as cofactor.

It is found in the plastid. Its subcellular location is the chloroplast. The enzyme catalyses (2E)-geranyl diphosphate + H2O = (S)-alpha-terpineol + diphosphate. It carries out the reaction (2E)-geranyl diphosphate + H2O = (R)-alpha-terpineol + diphosphate. It catalyses the reaction (2E)-geranyl diphosphate + H2O = (2E)-geraniol + diphosphate. The catalysed reaction is (2E)-geranyl diphosphate = terpinolene + diphosphate. The enzyme catalyses (2E)-geranyl diphosphate = (4S)-limonene + diphosphate. Its pathway is terpene metabolism; oleoresin biosynthesis. The protein operates within secondary metabolite biosynthesis; terpenoid biosynthesis. Functionally, monoterpene synthase (TPS) involved in the biosynthesis of monoterpene natural products included in conifer oleoresin secretions and volatile emissions; these compounds contribute to biotic and abiotic stress defense against herbivores and pathogens. Catalyzes the conversion of (2E)-geranyl diphosphate (GPP) to (-)-alpha-terpineol, (+)-alpha-terpineol and terpin-4-ol, and, to a lower extent, to geraniol, terpinolene and (-)-limonene. The sequence is that of Alpha terpineol synthase, chloroplastic from Pinus banksiana (Jack pine).